The following is a 439-amino-acid chain: Sex-determination protein fem-3 (439 aa).

The tract at residues 21–45 (RRLKRKANDDDDDDETVRERVDDAE) is disordered.

In terms of assembly, component of a complex containing fem-1, fem-2 and fem-3. Interacts with fem-1 and fem-2 (via N-terminus). Part of a E3 ubiquitin-protein ligase complex, at least composed of cul-2, elc-1, tra-1, fem-1, fem-2 and fem-3; mediates the ubiquitination and subsequent proteasomal degradation of tra-1. Interacts with tra-1. Interacts with sel-10. Interacts with tra-2.

Its function is as follows. Required for male development. In XO (male) animals, fem-3 directs male differentiation in all tissues. In XX (hermaphrodite) animals, it specifies the first 80 or so germ cells to be sperm. Negatively regulates male development when bound to tra-2. Together with fem-2 associates with the CBC(fem-1) E3 ubiquitin-protein ligase complex which mediates the ubiquitination and subsequent proteasomal degradation of tra-1. The chain is Sex-determination protein fem-3 from Caenorhabditis remanei (Caenorhabditis vulgaris).